A 117-amino-acid chain; its full sequence is METKQALEKADIIFSDNAAKKVSTLIEEEKNENLHLRVYITGGGCSGFSYGFNFDETYKEGDSSVENNGVQLVVDPMSYQYLIGATVDYLEDLQGARFIIHNPNAKTTCGCGSSFSV.

Residues Cys45, Cys109, and Cys111 each contribute to the iron-sulfur cluster site.

The protein belongs to the HesB/IscA family. Homodimer. Iron-sulfur cluster is required as a cofactor.

In terms of biological role, required for insertion of 4Fe-4S clusters for at least IspG. The sequence is that of Iron-sulfur cluster insertion protein ErpA from Ruthia magnifica subsp. Calyptogena magnifica.